Here is a 323-residue protein sequence, read N- to C-terminus: Ankyrin repeat and SOCS box protein 11 (323 aa).

ANK repeat units lie at residues 64–93 (ADRSPLHEAAAQGRLLALKTLIAQGVNVNL), 97–126 (NRVSSLHEACLGGHVACAKALLENGAHVNG), 130–159 (HGATPLFNACCSGSAACVNVLLEFGAKAQL), 162–191 (HLASPIHEAVKRGHRECMEILLANNVNIDH), 195–224 (QLGTPLYVACTYQRVDCVKKLLELGASVDH), and 227–256 (WLDTPLHAAARQSNVEVIHLLTDYGANLKR). An SOCS box domain is found at 273–323 (SVEQALLLREGPPALSQLCRLCVRKCLGRACHQAIHKLHLPEPLERFLLYQ).

It belongs to the ankyrin SOCS box (ASB) family. Substrate-recognition component of the ECS(ASB11) complex, composed of ASB11, CUL5, ELOB, ELOC and RNF7/RBX2.

It localises to the endoplasmic reticulum. The protein operates within protein modification; protein ubiquitination. Its function is as follows. Substrate-recognition component of a cullin-5-RING E3 ubiquitin-protein ligase complex (ECS complex, also named CRL5 complex), which mediates the ubiquitination and subsequent proteasomal degradation of target proteins, such as BIK, DIRAS2 and RPN1. The ECS(ASB11) complex acts as a regulator of the endoplasmic reticulum unfolded protein response by mediating ubiquitination and degradation of BIK. The protein is Ankyrin repeat and SOCS box protein 11 of Homo sapiens (Human).